The chain runs to 268 residues: Indole-3-glycerol phosphate synthase (268 aa).

It belongs to the TrpC family.

It carries out the reaction 1-(2-carboxyphenylamino)-1-deoxy-D-ribulose 5-phosphate + H(+) = (1S,2R)-1-C-(indol-3-yl)glycerol 3-phosphate + CO2 + H2O. The protein operates within amino-acid biosynthesis; L-tryptophan biosynthesis; L-tryptophan from chorismate: step 4/5. The sequence is that of Indole-3-glycerol phosphate synthase from Acinetobacter baumannii (strain ACICU).